A 131-amino-acid polypeptide reads, in one-letter code: Hydrophilin PGA14 (131 aa).

Positions 1–18 (MKFTTVATVFAISSLAAA) are cleaved as a signal peptide. Composition is skewed to basic and acidic residues over residues 42–59 (YGRF…ETGT) and 79–96 (KESD…RDSK). The disordered stretch occupies residues 42–110 (YGRFDKTSRS…NSTTSSGNNG (69 aa)). Residues Asn97 and Asn101 are each glycosylated (N-linked (GlcNAc...) asparagine). The span at 97-110 (NASSNSTTSSGNNG) shows a compositional bias: low complexity. Residue Ser105 is the site of GPI-anchor amidated serine attachment. A propeptide spans 106–131 (SGNNGVATGVSLGLAGVLAVGAALVI) (removed in mature form).

The protein belongs to the PGA14 family. The GPI-anchor is attached to the protein in the endoplasmic reticulum and serves to target the protein to the cell surface. There, the glucosamine-inositol phospholipid moiety is cleaved off and the GPI-modified mannoprotein is covalently attached via its lipidless GPI glycan remnant to the 1,6-beta-glucan of the outer cell wall layer.

The protein localises to the secreted. Its subcellular location is the cell wall. The protein resides in the membrane. Its function is as follows. Hydrophilin which is essential to overcome the simple stress of the desiccation-rehydration process. This chain is Hydrophilin PGA14 (PGA14), found in Candida albicans (strain SC5314 / ATCC MYA-2876) (Yeast).